The chain runs to 365 residues: tRNA-specific 2-thiouridylase MnmA (365 aa).

Residues 14–21 (AMSGGVDS) and leucine 40 contribute to the ATP site. Cysteine 108 functions as the Nucleophile in the catalytic mechanism. Cysteines 108 and 204 form a disulfide. Glycine 132 provides a ligand contact to ATP. Residues 154–156 (KDQ) are interaction with tRNA. Cysteine 204 acts as the Cysteine persulfide intermediate in catalysis.

The protein belongs to the MnmA/TRMU family.

The protein localises to the cytoplasm. It carries out the reaction S-sulfanyl-L-cysteinyl-[protein] + uridine(34) in tRNA + AH2 + ATP = 2-thiouridine(34) in tRNA + L-cysteinyl-[protein] + A + AMP + diphosphate + H(+). Catalyzes the 2-thiolation of uridine at the wobble position (U34) of tRNA, leading to the formation of s(2)U34. In Rickettsia africae (strain ESF-5), this protein is tRNA-specific 2-thiouridylase MnmA.